The following is a 676-amino-acid chain: MLLRNILHIPETHAHFLMPVLQSSGGHQVSMQNTILWNLFIQSIDKLLLYLMTCPQRALWGVTMVQLIAMIYKDQHVNTLQKLLNLWFEASLSESSEDNESNTSPPKKGSGDSSPMLTSDPTSDSSDNGSNGGGSSGKKEGCDERRQALREGTEATLQEVSRKGHDYQNAMARVTADKPDISEVASDSFEVPCSPQQHLNTEEAMDDIDYEEQVQEYEQEAAAVSSEPLNLSQPANNVNYTTNAVYASTTATETQTTSSLCAMTSLCYEPFKPPAPLPTRRNTLSEMLSDNYTSHSHVSAVKLGQKSSHAGQLQLTKGKCCPQKRECPSSQSELSDCGYATQVENPESISTSSNDDDGPQGKPQHQKPPCNTKPRNKQRTLMSPQDKKELRRKKLVKRSKSSLINMKGLVQHTPTNYDISNLLKEFTVDFLLKGYNYLVEELLKQLLTSAKVLIDTSHFFWLVTFFLKLAAQLELDMEHIDSILTYDVLSYLTYEGVSLCEQLELNAQQEGSDLQPYLRRMHLVVTAIREFLQTIETYNKVSHLSEDDRLRLHQLQLQIGATTDLRCLFVLLLRRFNPRIHSKQYLQDLVVTNHILMLILDSAAKLEGGQTIGLSEHISQFATLEVMHYYGILLEDFDNNGEFVNDCIFTMMHHIGGDLGQIGVLFQPIILKTYSR.

Residues Val77–Lys108 are necessary for normal circadian rhythm. Disordered stretches follow at residues Glu94 to Arg145 and Pro346 to Arg398. 2 stretches are compositionally biased toward low complexity: residues Ser101–Gly129 and Gln360–Pro369. The short motif at Lys388–Arg398 is the Nuclear localization signal element.

It belongs to the timeless family. As to quaternary structure, forms a heterodimer with period (PER); the complex then translocates into the nucleus. Post-translationally, phosphorylated with a circadian rhythmicity.

The protein resides in the nucleus. Its subcellular location is the cytoplasm. The protein localises to the perinuclear region. In terms of biological role, required for the production of circadian rhythms. The biological cycle depends on the rhythmic formation and nuclear localization of the TIM-PER complex. Light induces the degradation of TIM, which promotes elimination of PER. Nuclear activity of the heterodimer coordinatively regulates PER and TIM transcription through a negative feedback loop. Behaves as a negative element in circadian transcriptional loop. Does not appear to bind DNA, suggesting indirect transcriptional inhibition. This is Protein timeless (tim) from Drosophila hydei (Fruit fly).